Here is a 43-residue protein sequence, read N- to C-terminus: Protein PsbN (43 aa).

Residues 7–27 (LSISIGVMVVAITGFSIYTAF) form a helical membrane-spanning segment.

The protein belongs to the PsbN family.

The protein localises to the cellular thylakoid membrane. In terms of biological role, may play a role in photosystem I and II biogenesis. In Trichodesmium erythraeum (strain IMS101), this protein is Protein PsbN.